The following is a 276-amino-acid chain: MDAESLLLALELASGSGQGLSPDRRASLLTSLMLVKRDYRFDRVLFWGRILGLVADYYIAQGVSEDQLAPRKTLYSLNCMEWSLLPPATKEMETQTSVVKGRFMGDPSHEYEHTELQKVNEGEKVFEEEVVVQIKEETRLVSVIDQIDKAVAVIPRGALFKTPFGPINVNRTFEGLSLSEAKKLSSYFHFREPVELKNKTLLEKAELDPSLDFMDSLEHDIPKGSWSVQMERGNALVVLRSLLWPGLTFYHAPRTKNYGYIYVGTGEKNLDLPFML.

The protein belongs to the flagellar radial spoke RSP9 family. Component of the axonemal radial spoke 1 (RS1) and 2 (RS2) complexes, at least composed of spoke head proteins RSPH1, RSPH3, RSPH9 and the cilia-specific component RSPH4A or sperm-specific component RSPH6A, spoke stalk proteins RSPH14, DNAJB13, DYDC1, ROPN1L and NME5, and the RS1 complex-specific anchor protein IQUB. Interacts with IQUB. Interacts with RSPH3B. Interacts with RSPH4A. Interacts with RSPH6A. Interacts with CFAP61. Interacts with LRRC23.

It localises to the cytoplasm. It is found in the cytoskeleton. The protein resides in the cilium axoneme. The protein localises to the flagellum axoneme. Its subcellular location is the cell projection. It localises to the kinocilium. Its function is as follows. Functions as part of axonemal radial spoke complexes that play an important part in the motility of sperm and cilia. Essential for both the radial spoke head assembly and the central pair microtubule stability in ependymal motile cilia. Required for motility of olfactory and neural cilia and for the structural integrity of ciliary axonemes in both 9+0 and 9+2 motile cilia. The protein is Radial spoke head protein 9 homolog (RSPH9) of Bos taurus (Bovine).